The sequence spans 254 residues: Imidazole glycerol phosphate synthase subunit HisF (254 aa).

Residues Asp-12 and Asp-131 contribute to the active site.

This sequence belongs to the HisA/HisF family. Heterodimer of HisH and HisF.

The protein localises to the cytoplasm. The catalysed reaction is 5-[(5-phospho-1-deoxy-D-ribulos-1-ylimino)methylamino]-1-(5-phospho-beta-D-ribosyl)imidazole-4-carboxamide + L-glutamine = D-erythro-1-(imidazol-4-yl)glycerol 3-phosphate + 5-amino-1-(5-phospho-beta-D-ribosyl)imidazole-4-carboxamide + L-glutamate + H(+). It functions in the pathway amino-acid biosynthesis; L-histidine biosynthesis; L-histidine from 5-phospho-alpha-D-ribose 1-diphosphate: step 5/9. IGPS catalyzes the conversion of PRFAR and glutamine to IGP, AICAR and glutamate. The HisF subunit catalyzes the cyclization activity that produces IGP and AICAR from PRFAR using the ammonia provided by the HisH subunit. This is Imidazole glycerol phosphate synthase subunit HisF from Leifsonia xyli subsp. xyli (strain CTCB07).